A 164-amino-acid chain; its full sequence is uncharacterized protein (164 aa).

The next 4 helical transmembrane spans lie at 25–45, 63–83, 120–140, and 141–161; these read QFGF…PLLG, GMAV…VYIV, FWTA…ADFF, and TVQM…LMMM.

The protein belongs to the major facilitator superfamily.

The protein localises to the cell membrane. This is an uncharacterized protein from Bacillus subtilis (strain 168).